The following is a 149-amino-acid chain: MKVILLKDVKGLGDKGDVVNASDGYARNFLLPKKVAKEATEGSLQTLKEQKTAQKMKKDQEVDKAKELAERLSKVDVNIKAKAGEGGRLFGSVTSKDVIEKLQKQEGIKLDKRKLLLDEPIRELGSKWIDIKLHSGVVGKIKVTVTEEA.

It belongs to the bacterial ribosomal protein bL9 family.

Its function is as follows. Binds to the 23S rRNA. This chain is Large ribosomal subunit protein bL9, found in Alkaliphilus metalliredigens (strain QYMF).